The following is a 139-amino-acid chain: D-ribose pyranase (139 aa).

Residue histidine 20 is the Proton donor of the active site. Substrate is bound by residues aspartate 28, histidine 106, and 128-130 (FAN).

This sequence belongs to the RbsD / FucU family. RbsD subfamily. As to quaternary structure, homodecamer.

Its subcellular location is the cytoplasm. The enzyme catalyses beta-D-ribopyranose = beta-D-ribofuranose. It functions in the pathway carbohydrate metabolism; D-ribose degradation; D-ribose 5-phosphate from beta-D-ribopyranose: step 1/2. Catalyzes the interconversion of beta-pyran and beta-furan forms of D-ribose. In Klebsiella pneumoniae (strain 342), this protein is D-ribose pyranase.